A 313-amino-acid polypeptide reads, in one-letter code: Probable cell division protein WhiA (313 aa).

A DNA-binding region (H-T-H motif) is located at residues 278 to 311; the sequence is SLKELGKLLDPPLSKSGVNHRLRRIKSIANEIRG.

The protein belongs to the WhiA family.

Functionally, involved in cell division and chromosome segregation. This chain is Probable cell division protein WhiA, found in Halothermothrix orenii (strain H 168 / OCM 544 / DSM 9562).